The sequence spans 3127 residues: Probable polyketide synthase 33 (3127 aa).

A Ketosynthase family 3 (KS3) domain is found at 24–457 (SGDVAVVGIG…GSNVCLILSE (434 aa)). Residues Cys196, His335, and His380 each act as for beta-ketoacyl synthase activity in the active site. An acyl/malonyl transferase region spans residues 660–693 (GVSADIIIGHSLGEISSAYCSGMIDFQTLCYLTY). Catalysis depends on Ser670, which acts as the For acyl/malonyl transferase activity. The tract at residues 958-1080 (GPSIHSLGNN…GNFSLFKHNI (123 aa)) is N-terminal hotdog fold. Residues 958–1257 (GPSIHSLGNN…CTIVGSNPDS (300 aa)) enclose the PKS/mFAS DH domain. His992 acts as the Proton acceptor; for dehydratase activity in catalysis. The tract at residues 1096–1257 (NFTTISKQDF…CTIVGSNPDS (162 aa)) is C-terminal hotdog fold. Catalysis depends on Asp1168, which acts as the Proton donor; for dehydratase activity. The segment at 1369–1394 (SNNNNNNNNNNNNNNNNNNNNKNNGY) is disordered. Residues 1370 to 1394 (NNNNNNNNNNNNNNNNNNNNKNNGY) are compositionally biased toward low complexity. Residues 2539–2616 (SNNEIIRSTI…QSIEIIKSAH (78 aa)) enclose the Carrier domain. An O-(pantetheine 4'-phosphoryl)serine modification is found at Ser2576. The tract at residues 2617–2659 (NKNNNNNNINNNNNNNNNNNNNNNNNNNNNNNNNNNNNNNNNN) is disordered. Residues 2617 to 2671 (NKNNNNNNINNNNNNNNNNNNNNNNNNNNNNNNNNNNNNNNNNLVKKEQQSLDEF) adopt a coiled-coil conformation. The chain crosses the membrane as a helical span at residues 2937–2957 (VLTLYNIPITIFIAILIIDIF).

Requires pantetheine 4'-phosphate as cofactor.

The protein resides in the membrane. In terms of biological role, probable polyketide synthase. This is Probable polyketide synthase 33 (pks33) from Dictyostelium discoideum (Social amoeba).